Reading from the N-terminus, the 971-residue chain is Zinc finger CCCH domain-containing protein 7A (971 aa).

TPR repeat units follow at residues 43 to 76 (VRNL…ADYA), 89 to 122 (EKLY…NASN), and 124 to 156 (KALY…VPQD). Threonine 210 is subject to Phosphothreonine. C3H1-type zinc fingers lie at residues 634 to 656 (LCRH…HSLV) and 769 to 797 (PLQF…HSPE). The segment at 857 to 881 (FHCWMCGKNCNSEKQWQGHISSEKH) adopts a C2H2-type zinc-finger fold. The C3H1-type 3 zinc finger occupies 906–928 (ICDRYMNGTCPEGNSCKFAHGNA). A coiled-coil region spans residues 924-952 (AHGNAELHEWEERRDALKMKLNKARKDHL).

It is found in the nucleus. May be a specific regulator of miRNA biogenesis. Binds to microRNAs MIR7-1, MIR16-2 and MIR29A hairpins recognizing the 3'-ATA(A/T)-5' motif in the apical loop. In Homo sapiens (Human), this protein is Zinc finger CCCH domain-containing protein 7A (ZC3H7A).